A 339-amino-acid polypeptide reads, in one-letter code: MVREEVAGSTQTLQWKCVESRVDSKRLYYGRFILSPLRKGQADTVGIALRRALLGEIEGTCITRAKFGSVPHEYSTIAGIEESVQEILLNLKEIVLRSNLYGVRDASICVKGPRYITAQDIILPPSVEIVDTAQPIANLTEPIDFCIDLQIKRDRGYQTELRKNYQDGSYPIDAVSMPVRNVNYSIFSCGNGNEKHEILFLEIWTNGSLTPKEALYEASRNLIDLFLPFLHAEEEGTSFEENKNRFTPPLFTFKKRLTNLKKNKKGIPLNCIFIDQLELTSRTYNCLKRANIHTLLDLLSKTEEDLLRIDSFRMEDRKHIWDTLEKHLPIDLLKNKLSF.

Residues 1–233 (MVREEVAGST…DLFLPFLHAE (233 aa)) are alpha N-terminal domain (alpha-NTD). An alpha C-terminal domain (alpha-CTD) region spans residues 264 to 339 (KKGIPLNCIF…IDLLKNKLSF (76 aa)).

The protein belongs to the RNA polymerase alpha chain family. As to quaternary structure, in plastids the minimal PEP RNA polymerase catalytic core is composed of four subunits: alpha, beta, beta', and beta''. When a (nuclear-encoded) sigma factor is associated with the core the holoenzyme is formed, which can initiate transcription.

The protein localises to the plastid. It is found in the chloroplast. The catalysed reaction is RNA(n) + a ribonucleoside 5'-triphosphate = RNA(n+1) + diphosphate. DNA-dependent RNA polymerase catalyzes the transcription of DNA into RNA using the four ribonucleoside triphosphates as substrates. This chain is DNA-directed RNA polymerase subunit alpha, found in Eremopyrum distans.